We begin with the raw amino-acid sequence, 39 residues long: Ribonuclease UK114 (39 aa).

It belongs to the RutC family. In terms of assembly, monomer. The N-terminus may be blocked. In terms of tissue distribution, mainly expressed in the liver and kidney. Lower expression found in intestine, gizzard, glandular stomach, heart, brain and spleen.

The protein resides in the cytoplasm. Endoribonuclease responsible for the inhibition of the translation by cleaving mRNA. Inhibits cell-free protein synthesis. Cleaves phosphodiester bonds only in single-stranded RNA. In Gallus gallus (Chicken), this protein is Ribonuclease UK114.